A 532-amino-acid polypeptide reads, in one-letter code: Muscarinic acetylcholine receptor M5 (532 aa).

The Extracellular segment spans residues 1–29; that stretch reads MEGDSYHNATTVNGTPVNHQPLERHRLWE. N-linked (GlcNAc...) asparagine glycosylation is present at asparagine 8. A helical membrane pass occupies residues 30-53; the sequence is VITIAAVTAVVSLITIVGNVLVMI. Residues 54–66 are Cytoplasmic-facing; it reads SFKVNSQLKTVNN. A helical transmembrane segment spans residues 67-87; sequence YYLLSLACADLIIGIFSMNLY. The Extracellular portion of the chain corresponds to 88–104; it reads TTYILMGRWALGSLACD. Cysteine 103 and cysteine 183 are joined by a disulfide. Residues 105–126 traverse the membrane as a helical segment; it reads LWLALDYVASNASVMNLLVISF. At 127 to 146 the chain is on the cytoplasmic side; the sequence is DRYFSITRPLTYRAKRTPKR. Residues 147 to 169 form a helical membrane-spanning segment; that stretch reads AGIMIGLAWLISFILWAPAILCW. Residues 170 to 191 lie on the Extracellular side of the membrane; sequence QYLVGKRTVPLDECQIQFLSEP. Residues 192 to 214 form a helical membrane-spanning segment; it reads TITFGTAIAAFYIPVSVMTILYC. The Cytoplasmic portion of the chain corresponds to 215 to 443; sequence RIYRETEKRT…LVKERKAAQT (229 aa). Residues 262-294 form a disordered region; sequence AQRERNQASWSSSRRSTSTTGKPSQATGPSANW. A compositionally biased stretch (low complexity) spans 270–281; the sequence is SWSSSRRSTSTT. Polar residues predominate over residues 282–291; sequence GKPSQATGPS. A helical membrane pass occupies residues 444-464; the sequence is LSAILLAFIITWTPYNIMVLV. Topologically, residues 465 to 478 are extracellular; the sequence is STFCDKCVPVTLWH. Residues 479–498 form a helical membrane-spanning segment; the sequence is LGYWLCYVNSTVNPICYALC. At 499–532 the chain is on the cytoplasmic side; that stretch reads NRTFRKTFKMLLLCRWKKKKVEEKLYWQGNSKLP. Threonine 501 and threonine 505 each carry phosphothreonine.

Belongs to the G-protein coupled receptor 1 family. Muscarinic acetylcholine receptor subfamily. CHRM5 sub-subfamily.

The protein localises to the cell membrane. The protein resides in the postsynaptic cell membrane. Functionally, the muscarinic acetylcholine receptor mediates various cellular responses, including inhibition of adenylate cyclase, breakdown of phosphoinositides and modulation of potassium channels through the action of G proteins. Primary transducing effect is Pi turnover. The protein is Muscarinic acetylcholine receptor M5 (CHRM5) of Homo sapiens (Human).